The following is a 227-amino-acid chain: Large ribosomal subunit protein uL3 (227 aa).

An N5-methylglutamine modification is found at glutamine 151.

It belongs to the universal ribosomal protein uL3 family. Part of the 50S ribosomal subunit. Forms a cluster with proteins L14 and L19. Post-translationally, methylated by PrmB.

Its function is as follows. One of the primary rRNA binding proteins, it binds directly near the 3'-end of the 23S rRNA, where it nucleates assembly of the 50S subunit. This is Large ribosomal subunit protein uL3 from Gluconacetobacter diazotrophicus (strain ATCC 49037 / DSM 5601 / CCUG 37298 / CIP 103539 / LMG 7603 / PAl5).